Here is a 63-residue protein sequence, read N- to C-terminus: Potassium channel toxin alpha-KTx 21.1 (63 aa).

A signal peptide spans 1 to 27; the sequence is MQFSGVVLILISMTLVNFVFFETKVEA. 3 cysteine pairs are disulfide-bonded: Cys-33–Cys-53, Cys-38–Cys-58, and Cys-42–Cys-60.

The protein belongs to the short scorpion toxin superfamily. Potassium channel inhibitor family. Alpha-KTx 21 subfamily. As to expression, expressed by the venom gland.

The protein resides in the secreted. Functionally, reversibly and voltage-independently blocks voltage-gated potassium channels rKv1.2/KCNA2 (73%) (IC(50)=196 nM), hKv1.3/KCNA3 (50%) (IC(50)=508 nM), Shaker IR (30%), rKv1.6/KCNA6 (22%) (at 0.5 uM). Interaction of Ts15 with Kv1.3/KCNA3 is stronger than its interaction with Kv1.2/KCNA2. In Tityus serrulatus (Brazilian scorpion), this protein is Potassium channel toxin alpha-KTx 21.1.